A 290-amino-acid polypeptide reads, in one-letter code: Porphobilinogen deaminase (290 aa).

An S-(dipyrrolylmethanemethyl)cysteine modification is found at cysteine 237.

Belongs to the HMBS family. Monomer. The cofactor is dipyrromethane.

The enzyme catalyses 4 porphobilinogen + H2O = hydroxymethylbilane + 4 NH4(+). The protein operates within porphyrin-containing compound metabolism; protoporphyrin-IX biosynthesis; coproporphyrinogen-III from 5-aminolevulinate: step 2/4. In terms of biological role, tetrapolymerization of the monopyrrole PBG into the hydroxymethylbilane pre-uroporphyrinogen in several discrete steps. The sequence is that of Porphobilinogen deaminase from Clostridium botulinum (strain Langeland / NCTC 10281 / Type F).